We begin with the raw amino-acid sequence, 523 residues long: Leucine-rich repeat transmembrane neuronal protein 1 (523 aa).

The N-terminal stretch at 1–34 (MDFLLLGLCLHWLLRRPSGVVLCLLGACFQMLPA) is a signal peptide. The region spanning 35–63 (APSGCPGQCRCEGRLLYCEALNLTEAPHN) is the LRRNT domain. Residues 35-428 (APSGCPGQCR…HAENAVQIHK (394 aa)) are Extracellular-facing. N-linked (GlcNAc...) asparagine glycans are attached at residues asparagine 56 and asparagine 63. LRR repeat units lie at residues 64-87 (LSGL…QFTG), 89-111 (MQLT…AFQK), 112-135 (LRRV…TFRP), 136-159 (MPNL…LFHG), 161-183 (RKLT…IFQD), 184-207 (CRSL…SFAG), 209-231 (FKLT…HFPR), 233-255 (ISLN…LDWV), 256-278 (WNLE…VFET), and 280-302 (PYLQ…ILNS). An N-linked (GlcNAc...) asparagine glycan is attached at asparagine 130. In terms of domain architecture, LRRCT spans 314–365 (NLWDCGRNVCALASWLSNFQGRYDANLQCASPEYAQGEDVLDAVYAFHLCED). An N-linked (GlcNAc...) asparagine glycan is attached at asparagine 381. The chain crosses the membrane as a helical span at residues 429 to 449 (VVTGTMALIFSFLIVVLVLYV). Topologically, residues 450 to 523 (SWKCFPASLR…HQQPARECEV (74 aa)) are cytoplasmic. The May be involved in DLG4-binding motif lies at 520-523 (ECEV).

This sequence belongs to the LRRTM family. In terms of assembly, interacts with DLG4.

Its subcellular location is the cell membrane. The protein localises to the postsynaptic cell membrane. In terms of biological role, exhibits strong synaptogenic activity, restricted to excitatory presynaptic differentiation, acting at both pre- and postsynaptic level. The sequence is that of Leucine-rich repeat transmembrane neuronal protein 1 (Lrrtm1) from Rattus norvegicus (Rat).